Here is a 579-residue protein sequence, read N- to C-terminus: Capsid vertex component 2 (579 aa).

Residues 1-50 are interaction with major capsid protein/MCP; it reads MTARYGFGSISFPNKCGIFLSTTKNFIAPNFPIHYWTAPAFELRGRMNPD.

The protein belongs to the herpesviridae CVC2 protein family. In terms of assembly, heterodimerizes with CVC1. Interacts with major capsid protein/MCP and triplex capsid protein 1/TRX1 at the pentamer vertices. Interacts with the large tegument protein/LTP.

The protein localises to the virion. Its subcellular location is the host nucleus. In terms of biological role, capsid vertex-specific component that plays a role during viral DNA encapsidation, assuring correct genome cleavage and presumably stabilizing capsids that contain full-length viral genomes. Participates in the interaction between the capsid and the tegument through interaction with the large tegument protein/LTP. This is Capsid vertex component 2 from Homo sapiens (Human).